The following is a 497-amino-acid chain: Lysophospholipid acyltransferase 5 (497 aa).

Helical transmembrane passes span 31–51, 74–94, 100–120, 173–193, 213–235, and 264–286; these read LLTI…ISVI, GLDT…VLLL, IFLA…YFYT, LELL…QFPF, AGVR…LRYL, and SLYK…GLTY. Catalysis depends on residues Asn322 and His358. A helical transmembrane segment spans residues 339 to 361; that stretch reads FLNNRTISYGAALGFLAVWHGYH. Asn398 carries an N-linked (GlcNAc...) asparagine glycan. 2 helical membrane-spanning segments follow: residues 408-428 and 435-455; these read FITL…AFVF and IVVY…WAAF. Residues 469-497 form a disordered region; the sequence is KLAGEDQKLQDSNTDKLVEEKKPEDKKSE. Residues 470 to 497 are compositionally biased toward basic and acidic residues; sequence LAGEDQKLQDSNTDKLVEEKKPEDKKSE. The residue at position 480 (Ser480) is a Phosphoserine.

This sequence belongs to the membrane-bound acyltransferase family. As to expression, during gastrulation, expressed mainly along the midline in the presumptive mesoderm. During germ band elongation, expressed in mesoderm and endoderm primordia and in the cephalic furrow. Expression in mesoderm and endoderm lineages continues during germ band shortening. At the end of this process, no longer detected in somatic mesoderm or endoderm layer with expression restricted to anterior and posterior domains of the visceral mesoderm.

The protein resides in the endoplasmic reticulum. It is found in the membrane. It carries out the reaction a 1-acyl-sn-glycero-3-phospho-L-serine + an acyl-CoA = a 1,2-diacyl-sn-glycero-3-phospho-L-serine + CoA. It catalyses the reaction 1-(9Z-octadecenoyl)-sn-glycero-3-phospho-L-serine + (9Z)-hexadecenoyl-CoA = 1-(9Z-octadecenoyl)-2-(9Z-hexadecenoyl)-sn-glycero-3-phospho-L-serine + CoA. The catalysed reaction is a 1-acyl-sn-glycero-3-phosphocholine + an acyl-CoA = a 1,2-diacyl-sn-glycero-3-phosphocholine + CoA. The enzyme catalyses 1-hexadecanoyl-sn-glycero-3-phosphocholine + (9Z)-octadecenoyl-CoA = 1-hexadecanoyl-2-(9Z-octadecenoyl)-sn-glycero-3-phosphocholine + CoA. It carries out the reaction (9Z,12Z)-octadecadienoyl-CoA + 1-hexadecanoyl-sn-glycero-3-phosphocholine = 1-hexadecanoyl-2-(9Z,12Z-octadecadienoyl)-sn-glycero-3-phosphocholine + CoA. It catalyses the reaction (5Z,8Z,11Z,14Z)-eicosatetraenoyl-CoA + 1-hexadecanoyl-sn-glycero-3-phosphocholine = 1-hexadecanoyl-2-(5Z,8Z,11Z,14Z-eicosatetraenoyl)-sn-glycero-3-phosphocholine + CoA. The catalysed reaction is (9Z)-hexadecenoyl-CoA + 1-hexadecanoyl-sn-glycero-3-phosphocholine = 1-hexadecanoyl-2-(9Z-hexadecenoyl)-sn-glycero-3-phosphocholine + CoA. It functions in the pathway lipid metabolism; phospholipid metabolism. In terms of biological role, acyltransferase that mediates the acylation of lysophospholipids to produce phospholipids (glycerophospholipids). Highest activity with lysophosphatidylcholine (1-acyl-sn-glycero-3-phosphocholine or LPC) producing phosphatidylcholine (1,2-diacyl-sn-glycero-3-phosphocholine or PC) (LPCAT activity), but also converts lysophosphatidylserine (1-acyl-2-hydroxy-sn-glycero-3-phospho-L-serine or LPS) to phosphatidylserine (1,2-diacyl-sn-glycero-3-phospho-L-serine or PS) (LPSAT activity). Has a preference for unsaturated fatty acids of at least 16 carbons such as oleoyl-CoA ((9Z)-octadecenoyl-CoA) and palmitoleoyl-CoA ((9Z)-hexadecenoyl-CoA). Glycerophospholipids are important structural and functional components of cellular membrane, acyl-chain remodeling regulates the molecular species distribution of glycerophospholipids which can affect membrane fluidity and curvature. Essential for fertility and viability together with Oysgedart (Oys). Required for germ cells to migrate into the mesoderm. The sequence is that of Lysophospholipid acyltransferase 5 from Drosophila melanogaster (Fruit fly).